The following is a 148-amino-acid chain: Oleosin 1 (148 aa).

Position 2 is an N-acetylalanine (alanine 2). The interval 2-28 (ADQHFQQPLHFQGSYGQQQPRSYQVAK) is polar. Residues 29 to 148 (AATAVTAGGS…HVPSGQQQSS (120 aa)) form a hydrophobic region. 2 consecutive transmembrane segments (helical) span residues 37 to 57 (GSLL…LTIA) and 81 to 101 (GFLT…WIYK).

This sequence belongs to the oleosin family.

It localises to the lipid droplet. The protein localises to the membrane. In terms of biological role, may have a structural role to stabilize the lipid body during desiccation of the seed by preventing coalescence of the oil. Probably interacts with both lipid and phospholipid moieties of lipid bodies. May also provide recognition signals for specific lipase anchorage in lipolysis during seedling growth. The polypeptide is Oleosin 1 (OLE1) (Prunus dulcis (Almond)).